Here is a 341-residue protein sequence, read N- to C-terminus: Anthranilate phosphoribosyltransferase (341 aa).

5-phospho-alpha-D-ribose 1-diphosphate contacts are provided by residues Gly-79, Gly-82 to Asp-83, Thr-87, Asn-89 to Thr-92, Lys-107 to Ser-115, and Ser-119. Gly-79 lines the anthranilate pocket. Mg(2+) is bound at residue Ser-91. Asn-110 provides a ligand contact to anthranilate. Arg-165 serves as a coordination point for anthranilate. Mg(2+)-binding residues include Asp-224 and Glu-225.

The protein belongs to the anthranilate phosphoribosyltransferase family. Homodimer. Requires Mg(2+) as cofactor.

The enzyme catalyses N-(5-phospho-beta-D-ribosyl)anthranilate + diphosphate = 5-phospho-alpha-D-ribose 1-diphosphate + anthranilate. Its pathway is amino-acid biosynthesis; L-tryptophan biosynthesis; L-tryptophan from chorismate: step 2/5. Catalyzes the transfer of the phosphoribosyl group of 5-phosphorylribose-1-pyrophosphate (PRPP) to anthranilate to yield N-(5'-phosphoribosyl)-anthranilate (PRA). In Bacillus cereus (strain ATCC 14579 / DSM 31 / CCUG 7414 / JCM 2152 / NBRC 15305 / NCIMB 9373 / NCTC 2599 / NRRL B-3711), this protein is Anthranilate phosphoribosyltransferase.